A 500-amino-acid chain; its full sequence is NAD(P)H-quinone oxidoreductase chain 4, chloroplastic (500 aa).

The next 14 helical transmembrane spans lie at 4-24, 35-55, 87-107, 113-130, 134-154, 167-187, 211-231, 242-262, 272-292, 305-325, 330-350, 386-406, 416-436, and 466-486; these read FPWL…MLFL, YTIC…CYNF, IGTI…AFPV, LFHF…GSFS, LLLF…LLSM, FILY…GISL, IILY…IPLH, HYST…YGLV, AHSM…IYAA, IAYS…SITD, GAIL…FLAG, LALP…GIIT, ILII…LLSM, and ISSL…LALA.

It belongs to the complex I subunit 4 family.

It localises to the plastid. Its subcellular location is the chloroplast thylakoid membrane. It carries out the reaction a plastoquinone + NADH + (n+1) H(+)(in) = a plastoquinol + NAD(+) + n H(+)(out). The catalysed reaction is a plastoquinone + NADPH + (n+1) H(+)(in) = a plastoquinol + NADP(+) + n H(+)(out). This Aethionema grandiflorum (Persian stone-cress) protein is NAD(P)H-quinone oxidoreductase chain 4, chloroplastic.